Consider the following 264-residue polypeptide: uncharacterized protein (264 aa).

The N-terminal stretch at 1 to 23 is a signal peptide; that stretch reads MQQWNLTISNILIGLFFCFSAQA.

This is an uncharacterized protein from Shewanella oneidensis (strain ATCC 700550 / JCM 31522 / CIP 106686 / LMG 19005 / NCIMB 14063 / MR-1).